Consider the following 483-residue polypeptide: ATP synthase subunit beta (483 aa).

Position 169-176 (169-176 (GGAGVGKT)) interacts with ATP.

The protein belongs to the ATPase alpha/beta chains family. As to quaternary structure, F-type ATPases have 2 components, CF(1) - the catalytic core - and CF(0) - the membrane proton channel. CF(1) has five subunits: alpha(3), beta(3), gamma(1), delta(1), epsilon(1). CF(0) has three main subunits: a(1), b(2) and c(9-12). The alpha and beta chains form an alternating ring which encloses part of the gamma chain. CF(1) is attached to CF(0) by a central stalk formed by the gamma and epsilon chains, while a peripheral stalk is formed by the delta and b chains.

It localises to the cell membrane. It catalyses the reaction ATP + H2O + 4 H(+)(in) = ADP + phosphate + 5 H(+)(out). Functionally, produces ATP from ADP in the presence of a proton gradient across the membrane. The catalytic sites are hosted primarily by the beta subunits. This is ATP synthase subunit beta from Corynebacterium glutamicum (strain R).